We begin with the raw amino-acid sequence, 138 residues long: Spermatid nuclear transition protein 4 (138 aa).

Residues 1-11 (AKVSRKPREPR) are compositionally biased toward basic and acidic residues. The interval 1–138 (AKVSRKPREP…QGVTRRGRRY (138 aa)) is disordered. Ser-4 carries the phosphoserine; by PKC modification. Residues 5 to 23 (RKPREPRTAVTQSTRRIKR) carry the Nuclear localization signal motif. 3 stretches are compositionally biased toward basic residues: residues 19-34 (RRIK…RSRG), 43-57 (MKIK…RRKI), and 65-74 (KKAKKARKHF). Position 26 is a phosphothreonine; by PKA (Thr-26). Positions 54–72 (RRKIQTSAGQPKKAKKARK) match the Nuclear localization signal motif. A compositionally biased stretch (low complexity) spans 86 to 101 (NKKTNQNKRQNQNKRQ). The segment covering 120–131 (PTTSCKWCSQGV) has biased composition (polar residues).

The protein localises to the nucleus. Its subcellular location is the chromosome. Its function is as follows. Involved in nuclear basic protein transition: histones are replaced by spermatid specific proteins which are themselves replaced by protamines in late spermatids. The chain is Spermatid nuclear transition protein 4 (TNP4) from Sus scrofa (Pig).